Here is a 190-residue protein sequence, read N- to C-terminus: Potassium-transporting ATPase KdpC subunit (190 aa).

A helical transmembrane segment spans residues 10–30 (LLVFLTILTGGVYPLATTVLG).

The protein belongs to the KdpC family. The system is composed of three essential subunits: KdpA, KdpB and KdpC.

It is found in the cell inner membrane. In terms of biological role, part of the high-affinity ATP-driven potassium transport (or Kdp) system, which catalyzes the hydrolysis of ATP coupled with the electrogenic transport of potassium into the cytoplasm. This subunit acts as a catalytic chaperone that increases the ATP-binding affinity of the ATP-hydrolyzing subunit KdpB by the formation of a transient KdpB/KdpC/ATP ternary complex. The polypeptide is Potassium-transporting ATPase KdpC subunit (Cronobacter sakazakii (strain ATCC BAA-894) (Enterobacter sakazakii)).